The primary structure comprises 481 residues: ATP synthase subunit beta (481 aa).

G160–T167 lines the ATP pocket.

The protein belongs to the ATPase alpha/beta chains family. As to quaternary structure, F-type ATPases have 2 components, CF(1) - the catalytic core - and CF(0) - the membrane proton channel. CF(1) has five subunits: alpha(3), beta(3), gamma(1), delta(1), epsilon(1). CF(0) has three main subunits: a(1), b(2) and c(9-12). The alpha and beta chains form an alternating ring which encloses part of the gamma chain. CF(1) is attached to CF(0) by a central stalk formed by the gamma and epsilon chains, while a peripheral stalk is formed by the delta and b chains.

The protein resides in the cell inner membrane. The enzyme catalyses ATP + H2O + 4 H(+)(in) = ADP + phosphate + 5 H(+)(out). Functionally, produces ATP from ADP in the presence of a proton gradient across the membrane. The catalytic sites are hosted primarily by the beta subunits. This Anaeromyxobacter sp. (strain Fw109-5) protein is ATP synthase subunit beta.